Here is a 177-residue protein sequence, read N- to C-terminus: Ribosome rescue factor SmrB (177 aa).

The tract at residues 22-45 (SKKLRQDTIIHQPSKNFSEQQKQR) is disordered. Residues 30–41 (IIHQPSKNFSEQ) are compositionally biased toward polar residues. Positions 98 to 173 (LDMHGMKQDE…GAGAILVLLS (76 aa)) constitute a Smr domain.

Belongs to the SmrB family. Associates with collided ribosomes, but not with correctly translating polysomes.

Functionally, acts as a ribosome collision sensor. Detects stalled/collided disomes (pairs of ribosomes where the leading ribosome is stalled and a second ribosome has collided with it) and endonucleolytically cleaves mRNA at the 5' boundary of the stalled ribosome. Stalled/collided disomes form a new interface (primarily via the 30S subunits) that binds SmrB. Cleaved mRNA becomes available for tmRNA ligation, leading to ribosomal subunit dissociation and rescue of stalled ribosomes. This is Ribosome rescue factor SmrB from Aliivibrio salmonicida (strain LFI1238) (Vibrio salmonicida (strain LFI1238)).